Here is a 428-residue protein sequence, read N- to C-terminus: Kynureninase (428 aa).

Pyridoxal 5'-phosphate contacts are provided by residues Thr104, Thr105, 132–135 (FPSD), Asp213, His216, and Tyr238. N6-(pyridoxal phosphate)lysine is present on Lys239. Pyridoxal 5'-phosphate-binding residues include Trp267 and Thr295.

This sequence belongs to the kynureninase family. Homodimer. Requires pyridoxal 5'-phosphate as cofactor.

The enzyme catalyses L-kynurenine + H2O = anthranilate + L-alanine + H(+). It catalyses the reaction 3-hydroxy-L-kynurenine + H2O = 3-hydroxyanthranilate + L-alanine + H(+). It functions in the pathway amino-acid degradation; L-kynurenine degradation; L-alanine and anthranilate from L-kynurenine: step 1/1. The protein operates within cofactor biosynthesis; NAD(+) biosynthesis; quinolinate from L-kynurenine: step 2/3. Functionally, catalyzes the cleavage of L-kynurenine (L-Kyn) and L-3-hydroxykynurenine (L-3OHKyn) into anthranilic acid (AA) and 3-hydroxyanthranilic acid (3-OHAA), respectively. This is Kynureninase from Bacillus thuringiensis subsp. konkukian (strain 97-27).